Consider the following 223-residue polypeptide: MQTWSDVLGQEKKQAYFQETMDFVRREREAGKIVYPPAADVFNAFKYTEFADVKVVILGQDPYHGPNQAHGLCFSVLPGVAVPPSLVNIYKELHRDIPGFEIPSHGYLLSWAQQGVLLLNTVLTVEAGKAHSHASSGWEHFTDRVIAALNEHREGLVFLLWGNHAQKKGQYIDRQRHHVLMAPHPSPLSAHRGFLGCGHFSQTNQFLTDADKQPINWQIAPIA.

Asp-61 (proton acceptor) is an active-site residue.

Belongs to the uracil-DNA glycosylase (UDG) superfamily. UNG family.

It localises to the cytoplasm. The enzyme catalyses Hydrolyzes single-stranded DNA or mismatched double-stranded DNA and polynucleotides, releasing free uracil.. Functionally, excises uracil residues from the DNA which can arise as a result of misincorporation of dUMP residues by DNA polymerase or due to deamination of cytosine. This is Uracil-DNA glycosylase from Tolumonas auensis (strain DSM 9187 / NBRC 110442 / TA 4).